The following is an 81-amino-acid chain: Cytochrome b559 subunit alpha (81 aa).

A helical membrane pass occupies residues 21–35 (VIHSITIPSLFVSGW). His23 serves as a coordination point for heme.

The protein belongs to the PsbE/PsbF family. Heterodimer of an alpha subunit and a beta subunit. PSII is composed of 1 copy each of membrane proteins PsbA, PsbB, PsbC, PsbD, PsbE, PsbF, PsbH, PsbI, PsbJ, PsbK, PsbL, PsbM, PsbT, PsbX, PsbY, PsbZ, Psb30/Ycf12, at least 3 peripheral proteins of the oxygen-evolving complex and a large number of cofactors. It forms dimeric complexes. Requires heme b as cofactor.

The protein resides in the plastid. It is found in the chloroplast thylakoid membrane. This b-type cytochrome is tightly associated with the reaction center of photosystem II (PSII). PSII is a light-driven water:plastoquinone oxidoreductase that uses light energy to abstract electrons from H(2)O, generating O(2) and a proton gradient subsequently used for ATP formation. It consists of a core antenna complex that captures photons, and an electron transfer chain that converts photonic excitation into a charge separation. The polypeptide is Cytochrome b559 subunit alpha (Mesostigma viride (Green alga)).